The following is a 146-amino-acid chain: Prolactin-inducible protein homolog (146 aa).

An N-terminal signal peptide occupies residues 1-28 (MRLLQLLFRASPATLLLVLCLQLGANKA). Q29 is modified (pyrrolidone carboxylic acid). 2 disulfide bridges follow: C65–C91 and C89–C123. A glycan (N-linked (GlcNAc...) asparagine) is linked at N105.

It belongs to the PIP family. In terms of assembly, monomer. Interacts with AZGP1.

The protein resides in the secreted. This is Prolactin-inducible protein homolog (PIP) from Gorilla gorilla gorilla (Western lowland gorilla).